The primary structure comprises 457 residues: Argininosuccinate lyase (457 aa).

It belongs to the lyase 1 family. Argininosuccinate lyase subfamily.

The protein localises to the cytoplasm. The catalysed reaction is 2-(N(omega)-L-arginino)succinate = fumarate + L-arginine. The protein operates within amino-acid biosynthesis; L-arginine biosynthesis; L-arginine from L-ornithine and carbamoyl phosphate: step 3/3. In Aquifex aeolicus (strain VF5), this protein is Argininosuccinate lyase.